A 352-amino-acid polypeptide reads, in one-letter code: Heat-inducible transcription repressor HrcA (352 aa).

This sequence belongs to the HrcA family.

In terms of biological role, negative regulator of class I heat shock genes (grpE-dnaK-dnaJ and groELS operons). Prevents heat-shock induction of these operons. The chain is Heat-inducible transcription repressor HrcA from Ralstonia nicotianae (strain ATCC BAA-1114 / GMI1000) (Ralstonia solanacearum).